Here is a 337-residue protein sequence, read N- to C-terminus: MNAFIQGLPKVELHLHIEGSLEPELMFKLAKRNGIDIPYSSPSELREAYQFEDLQSFLDLYYQGANVLRTEQDFYDLTWEYLEHCKADNVIHTEIFFDPQTHTERGIDFDTVLNGISRALTDGREKLGITSQIIACFLRHLSEESAMETLQSVLKHRDKIIGVGLDSSEKGHPPAKFLRVFQQAKEAGLLTVAHAGEEGPAQNITDAIEMLEVSRVDHGVRCVEDEALVGSLIETKMPLTVCPLSNIKLCVFDEMGQHNIVELLRKGVAVTINSDDPVYFGGYMTDNFLAVNQAHPMIKEELAKFTLNAIDASFIDNELKAQYRHKVEQYVAQHSSM.

Residues His-14, His-16, and His-194 each contribute to the Zn(2+) site. Glu-197 serves as the catalytic Proton donor. Asp-275 contributes to the Zn(2+) binding site. Asp-276 contributes to the substrate binding site.

The protein belongs to the metallo-dependent hydrolases superfamily. Adenosine and AMP deaminases family. Adenine deaminase type 2 subfamily. It depends on Zn(2+) as a cofactor.

The catalysed reaction is adenine + H2O + H(+) = hypoxanthine + NH4(+). Functionally, catalyzes the hydrolytic deamination of adenine to hypoxanthine. Plays an important role in the purine salvage pathway and in nitrogen catabolism. This is Adenine deaminase from Vibrio parahaemolyticus serotype O3:K6 (strain RIMD 2210633).